We begin with the raw amino-acid sequence, 100 residues long: Urease subunit gamma (100 aa).

The protein belongs to the urease gamma subunit family. Heterotrimer of UreA (gamma), UreB (beta) and UreC (alpha) subunits. Three heterotrimers associate to form the active enzyme.

Its subcellular location is the cytoplasm. The enzyme catalyses urea + 2 H2O + H(+) = hydrogencarbonate + 2 NH4(+). Its pathway is nitrogen metabolism; urea degradation; CO(2) and NH(3) from urea (urease route): step 1/1. This is Urease subunit gamma from Blochmanniella pennsylvanica (strain BPEN).